A 634-amino-acid polypeptide reads, in one-letter code: Kinesin-like protein KIF22 (634 aa).

The Kinesin motor domain occupies 19-345; it reads RVRVAVRLRP…LNFAAKSKQI (327 aa). 103-110 is a binding site for ATP; it reads GPTGAGKT. Positions 357-406 are disordered; the sequence is APTIAPGKRTREEQEAGGSGEPQNKRSKEGKKAEHSPSPPLHPQSSPDSS. A compositionally biased stretch (basic and acidic residues) spans 379–391; it reads QNKRSKEGKKAEH. The stretch at 421-471 forms a coiled coil; it reads SAERERLNLLKTVAQSRKEIQMLKEKQKELEDKANMFNKQKETTEKESKDA.

The protein belongs to the TRAFAC class myosin-kinesin ATPase superfamily. Kinesin family. Post-translationally, ubiquitinated, leading to its subsequent proteasomal degradation.

It localises to the nucleus. The protein localises to the cytoplasm. The protein resides in the cytoskeleton. Kinesin family member that is involved in spindle formation and the movements of chromosomes during mitosis and meiosis. Binds to microtubules and to DNA. This Danio rerio (Zebrafish) protein is Kinesin-like protein KIF22 (kif22).